The sequence spans 266 residues: Killer cell lectin-like receptor 3 (266 aa).

Topologically, residues 1–48 (MSEPEVTYSTVRLHKSSGLQKLVRHEETQGPREVGNRKCSAPWQLIVK) are cytoplasmic. Residues 49–69 (ALGILCFLLLVTVAVLAVKIF) form a helical; Signal-anchor for type II membrane protein membrane-spanning segment. Over 70-266 (QYNQHKQEIN…CGKKLDKFPD (197 aa)) the chain is Extracellular. N-linked (GlcNAc...) asparagine glycosylation is found at Asn79, Asn87, Asn104, and Asn113. An involved in dimerization region spans residues 147–151 (WFCYS). Cys149 and Cys154 are joined by a disulfide. The C-type lectin domain maps to 150–258 (YSTKCYYFIM…CNIPYYCICG (109 aa)). N-linked (GlcNAc...) asparagine glycosylation occurs at Asn160. 5 implicated in MHC class I binding regions span residues 160–162 (NKT), 195–196 (IP), 207–208 (KK), 224–233 (MKIRKMNFKS), and 240–245 (SKARIE). 3 disulfides stabilise this stretch: Cys167/Cys255, Cys171/Cys257, and Cys236/Cys249.

In terms of assembly, homodimer; disulfide-linked.

It localises to the membrane. Functionally, receptor on natural killer (NK) cells for class I MHC. The sequence is that of Killer cell lectin-like receptor 3 (Klra3) from Mus musculus (Mouse).